The chain runs to 305 residues: Phosphoinositol dihydroceramide synthase (305 aa).

A signal peptide spans 1 to 23 (MPSKKETLTVIVIMALFLLLTAA). C24 is lipidated: N-palmitoyl cysteine. The S-diacylglycerol cysteine moiety is linked to residue C24. The next 6 membrane-spanning stretches (helical) occupy residues 41-61 (LFFA…FAIF), 117-137 (VFAG…GLCL), 149-169 (FALV…IHPA), 216-236 (FAAV…YAII), 241-261 (WYVI…AIYS), and 266-286 (IIDV…FEYG).

It is found in the membrane. It carries out the reaction N-(2-hydroxy-fatty acyl)-dihydroceramide + a 1,2-diacyl-sn-glycero-3-phospho-(1D-myo-inositol) = inositol-1-phospho-N-(2-hydroxy-fatty acyl)-dihydroceramide + a 1,2-diacyl-sn-glycerol. Functionally, catalyzes the addition of a phosphorylinositol group onto dihydroceramide to form phosphoinositol dihydroceramide (PI-DHC), an essential step in sphingolipid biosynthesis. The polypeptide is Phosphoinositol dihydroceramide synthase (Bacteroides thetaiotaomicron (strain ATCC 29148 / DSM 2079 / JCM 5827 / CCUG 10774 / NCTC 10582 / VPI-5482 / E50)).